The sequence spans 489 residues: Glutamyl-tRNA(Gln) amidotransferase subunit A (489 aa).

Residues lysine 80 and serine 160 each act as charge relay system in the active site. Serine 184 (acyl-ester intermediate) is an active-site residue.

This sequence belongs to the amidase family. GatA subfamily. Heterotrimer of A, B and C subunits.

The catalysed reaction is L-glutamyl-tRNA(Gln) + L-glutamine + ATP + H2O = L-glutaminyl-tRNA(Gln) + L-glutamate + ADP + phosphate + H(+). Functionally, allows the formation of correctly charged Gln-tRNA(Gln) through the transamidation of misacylated Glu-tRNA(Gln) in organisms which lack glutaminyl-tRNA synthetase. The reaction takes place in the presence of glutamine and ATP through an activated gamma-phospho-Glu-tRNA(Gln). The chain is Glutamyl-tRNA(Gln) amidotransferase subunit A from Wolbachia sp. subsp. Drosophila simulans (strain wRi).